We begin with the raw amino-acid sequence, 191 residues long: MLSSIKCVLVGDSAVGKTSLLVRFTSETFPEAYKPTVYENTGVDVLMDGIQISLGLWDTAGNDAFRSIRPLSYQQADVVLMCYSVANHNSFLNLKNKWIGEVRSNLPCTPVLVVATQTDQREVGPHRASCVNAIEGKRLAQDVRAKGYLECSALSNRGVQQVFECAVRTAVNQARRRNRRRFFSINECKIL.

G11–T18 lines the GTP pocket. Residues Y33 to T41 carry the Effector region motif. D58–N62 contacts GTP. The interval Y73–A86 is interaction with ZAP70. Residue T116–D119 coordinates GTP. C188 bears the Cysteine methyl ester mark. C188 carries the S-geranylgeranyl cysteine lipid modification. The propeptide at K189–L191 is removed in mature form.

This sequence belongs to the small GTPase superfamily. Rho family. As to quaternary structure, interacts with GDI1 and GDI2. Interacts with ZAP70 (via SH2 domains) and the interaction is enhanced by its phosphorylation by LCK. Interacts with SYK and the interaction is enhanced by its phosphorylation by FYN. Phosphorylated on tyrosine by LCK. Phosphorylated by FYN. Phosphorylation enhances the interactions with ZAP70 and SYK and is critical for its function in thymocyte development.

It is found in the cytoplasm. The protein localises to the cell membrane. Its function is as follows. Binds GTP but lacks intrinsic GTPase activity and is resistant to Rho-specific GTPase-activating proteins. Inhibits the activation of NF-kappa-B by TNF and IKKB and the activation of CRK/p38 by TNF. Inhibits activities of RAC1, RHOA and CDC42. Negatively regulates leukotriene production in neutrophils. Negative regulator of hematopoietic progenitor cell proliferation, survival and migration. Critical regulator of thymocyte development and T-cell antigen receptor (TCR) signaling by mediating recruitment and activation of ZAP70. Required for phosphorylation of CD3Z, membrane translocation of ZAP70 and subsequent activation of the ZAP70-mediated pathways. Essential for efficient beta-selection and positive selection by promoting the ZAP70-dependent phosphorylation of the LAT signalosome during pre-TCR and TCR signaling. Crucial for thymocyte maturation during DN3 to DN4 transition and during positive selection. Plays critical roles in mast cell function by facilitating phosphorylation of SYK in Fc epsilon RI-mediated signal transduction. Essential for the phosphorylation of LAT, LCP2, PLCG1 and PLCG2 and for Ca(2+) mobilization in mast cells. This Bos taurus (Bovine) protein is Rho-related GTP-binding protein RhoH (RHOH).